A 340-amino-acid chain; its full sequence is Pre-mRNA-splicing factor cwf17 (340 aa).

WD repeat units lie at residues 48–87 (GHTA…KNYG), 91–130 (GCKG…KIRK), 133–173 (GHAG…CIKT), 175–214 (EEKY…CSHV), 217–256 (GHKD…SAQR), 267–306 (GQEH…RYVL), and 308–339 (GHEG…LGEL).

In terms of assembly, belongs to the 40S cdc5-associated complex (or cwf complex), a spliceosome sub-complex reminiscent of a late-stage spliceosome composed of the U2, U5 and U6 snRNAs and at least brr2, cdc5, cwf2/prp3, cwf3/syf1, cwf4/syf3, cwf5/ecm2, spp42/cwf6, cwf7/spf27, cwf8, cwf9, cwf10, cwf11, cwf12, prp45/cwf13, cwf14, cwf15, cwf16, cwf17, cwf18, cwf19, cwf20, cwf21, cwf22, cwf23, cwf24, cwf25, cwf26, cyp7/cwf27, cwf28, cwf29/ist3, lea1, msl1, prp5/cwf1, prp10, prp12/sap130, prp17, prp22, sap61, sap62, sap114, sap145, slu7, smb1, smd1, smd3, smf1, smg1 and syf2.

It localises to the nucleus. Functionally, involved in mRNA splicing where it associates with cdc5 and the other cwf proteins as part of the spliceosome. This is Pre-mRNA-splicing factor cwf17 (cwf17) from Schizosaccharomyces pombe (strain 972 / ATCC 24843) (Fission yeast).